Here is a 301-residue protein sequence, read N- to C-terminus: Syntaxin-17 (301 aa).

Serine 2 is modified (N-acetylserine). The Cytoplasmic portion of the chain corresponds to 2–227; that stretch reads SEDEEKVKLR…KNLQKAAKYK (226 aa). N6-acetyllysine is present on lysine 41. Residues 49-128 are a coiled coil; the sequence is DKLHEEHINA…QVKNEEALLQ (80 aa). Tyrosine 156 bears the Phosphotyrosine; by ABL1 mark. Residues 161 to 223 form the t-SNARE coiled-coil homology domain; sequence IPRDQNAAES…EEGTKNLQKA (63 aa). The chain crosses the membrane as a helical span at residues 228–248; the sequence is LAALPVAGAVIGGVVGGPIGL. The tract at residues 228 to 274 is necessary and sufficient for localization to autophagosome; sequence LAALPVAGAVIGGVVGGPIGLLAGFKVAGIAAALGGGVLGFTGGKLI. Topologically, residues 249-253 are lumenal; it reads LAGFK. Residues 254–274 traverse the membrane as a helical segment; that stretch reads VAGIAAALGGGVLGFTGGKLI. The segment at 273-301 is required for interaction with COPB1, TMED9 and TMED10; sequence LIQRRKQKMMEKLTSSCPDLPSQSDKKCS. The Cytoplasmic segment spans residues 275–301; the sequence is QRRKQKMMEKLTSSCPDLPSQSDKKCS. Position 288 is a phosphoserine (serine 288). The Endoplasmic reticulum retention signal motif lies at 298-301; the sequence is KKCS.

This sequence belongs to the syntaxin family. Forms a SNARE complex composed of VAMP8, SNAP29 and STX17 involved in fusion of autophagosome with lysosome. May interact with VAMP7. May interact with VTI1B. Probably interacts with BET1, SCFD1 and SEC22B. Interacts with PTPN2 and ABL1; involved in STX17 phosphorylation. Interacts with COPB1. Interacts with TMED9 and TMED10; the interaction is direct. Interacts with RUBCNL/PACER; promoting targeting of RUBCNL/PACER to autophagosome. Interacts with VAMP8, SNAP29, VPS39 and VPS41; these interactions are increased in the absence of TMEM39A. Interacts with IRGM; promoting STX17 recruitment to autophagosomes. Interacts with ATG8 proteins GABARAP and MAP1LC3B. Interacts with RNF115; this interaction enhances STX17 stability which in turn promotes autophagosome maturation. Interacts with RAB39A (GTP-bound); the interaction promotes autophagosome-lysosome membrane fusion driven by STX17-SNAP29-VAMP8. Interacts with RAB39B; the interaction may promote a different fonction in autophagy as compared with RAB39A. Post-translationally, phosphorylated at Tyr-156 probably by ABL1. Dephosphorylation by PTPN2; regulates exit from the endoplasmic reticulum. Detected in all tissues examined with higher expression in steroidogenic tissues including testis and adrenal gland (at protein level). Highly expressed in liver and testis. Also found in brain, heart, kidney, lung, placenta, skeletal muscle and spleen.

It is found in the endoplasmic reticulum membrane. Its subcellular location is the smooth endoplasmic reticulum membrane. It localises to the endoplasmic reticulum-Golgi intermediate compartment membrane. The protein resides in the cytoplasmic vesicle. The protein localises to the autophagosome membrane. It is found in the COPII-coated vesicle membrane. Its subcellular location is the cytoplasm. It localises to the cytosol. The protein resides in the mitochondrion membrane. The protein localises to the autolysosome membrane. Its function is as follows. SNAREs, soluble N-ethylmaleimide-sensitive factor-attachment protein receptors, are essential proteins for fusion of cellular membranes. SNAREs localized on opposing membranes assemble to form a trans-SNARE complex, an extended, parallel four alpha-helical bundle that drives membrane fusion. STX17 is a SNARE of the autophagosome involved in autophagy through the direct control of autophagosome membrane fusion with the lysosome membrane. May also play a role in the early secretory pathway where it may maintain the architecture of the endoplasmic reticulum-Golgi intermediate compartment/ERGIC and Golgi and/or regulate transport between the endoplasmic reticulum, the ERGIC and the Golgi. The polypeptide is Syntaxin-17 (Rattus norvegicus (Rat)).